Consider the following 131-residue polypeptide: Leptin receptor overlapping transcript-like 1 (131 aa).

Transmembrane regions (helical) follow at residues 7 to 27 (LISL…GCAL), 32 to 52 (QYWP…YCIA), 69 to 89 (LAIF…VVFA), and 100 to 120 (ALVL…FLVF).

The protein belongs to the OB-RGRP/VPS55 family. As to quaternary structure, interacts with RAB13.

The protein localises to the membrane. Its function is as follows. Negatively regulates growth hormone (GH) receptor cell surface expression in liver. May play a role in liver resistance to GH during periods of reduced nutrient availability. The protein is Leptin receptor overlapping transcript-like 1 (Leprotl1) of Mus musculus (Mouse).